The sequence spans 638 residues: Chaperone protein HtpG (638 aa).

The interval methionine 1–arginine 328 is a; substrate-binding. The interval glutamate 329–arginine 558 is b. Residues leucine 484 to alanine 508 form a disordered region. The segment at phenylalanine 559–lysine 638 is c.

Belongs to the heat shock protein 90 family. As to quaternary structure, homodimer.

It is found in the cytoplasm. Functionally, molecular chaperone. Has ATPase activity. The chain is Chaperone protein HtpG from Anaplasma marginale (strain St. Maries).